The following is a 71-amino-acid chain: MMRRILLKSIKFYRIYLSPLKRNACCKFIPTCSQYAIDAIEKYGALKGSFMAVKRILRCNPFSKGGYDPVK.

It belongs to the UPF0161 family.

Its subcellular location is the cell membrane. In terms of biological role, could be involved in insertion of integral membrane proteins into the membrane. This is Putative membrane protein insertion efficiency factor from Clostridium acetobutylicum (strain ATCC 824 / DSM 792 / JCM 1419 / IAM 19013 / LMG 5710 / NBRC 13948 / NRRL B-527 / VKM B-1787 / 2291 / W).